The chain runs to 556 residues: Dihydroxy-acid dehydratase (556 aa).

C47 lines the [2Fe-2S] cluster pocket. Residue D79 coordinates Mg(2+). C120 contributes to the [2Fe-2S] cluster binding site. D121 and K122 together coordinate Mg(2+). K122 carries the post-translational modification N6-carboxylysine. Residue C192 participates in [2Fe-2S] cluster binding. E444 contributes to the Mg(2+) binding site. S470 functions as the Proton acceptor in the catalytic mechanism.

This sequence belongs to the IlvD/Edd family. As to quaternary structure, homodimer. Requires [2Fe-2S] cluster as cofactor. It depends on Mg(2+) as a cofactor.

The enzyme catalyses (2R)-2,3-dihydroxy-3-methylbutanoate = 3-methyl-2-oxobutanoate + H2O. It carries out the reaction (2R,3R)-2,3-dihydroxy-3-methylpentanoate = (S)-3-methyl-2-oxopentanoate + H2O. It participates in amino-acid biosynthesis; L-isoleucine biosynthesis; L-isoleucine from 2-oxobutanoate: step 3/4. Its pathway is amino-acid biosynthesis; L-valine biosynthesis; L-valine from pyruvate: step 3/4. In terms of biological role, functions in the biosynthesis of branched-chain amino acids. Catalyzes the dehydration of (2R,3R)-2,3-dihydroxy-3-methylpentanoate (2,3-dihydroxy-3-methylvalerate) into 2-oxo-3-methylpentanoate (2-oxo-3-methylvalerate) and of (2R)-2,3-dihydroxy-3-methylbutanoate (2,3-dihydroxyisovalerate) into 2-oxo-3-methylbutanoate (2-oxoisovalerate), the penultimate precursor to L-isoleucine and L-valine, respectively. In Prochlorococcus marinus (strain MIT 9211), this protein is Dihydroxy-acid dehydratase.